The sequence spans 103 residues: Nucleoid-associated protein SUN_2278 (103 aa).

The protein belongs to the YbaB/EbfC family. Homodimer.

The protein resides in the cytoplasm. Its subcellular location is the nucleoid. Binds to DNA and alters its conformation. May be involved in regulation of gene expression, nucleoid organization and DNA protection. In Sulfurovum sp. (strain NBC37-1), this protein is Nucleoid-associated protein SUN_2278.